We begin with the raw amino-acid sequence, 189 residues long: Dual-action ribosomal maturation protein DarP (189 aa).

Positions 1–22 (MWKNGAMRGCNKETGEFLGPSR) are disordered.

This sequence belongs to the DarP family.

It is found in the cytoplasm. In terms of biological role, member of a network of 50S ribosomal subunit biogenesis factors which assembles along the 30S-50S interface, preventing incorrect 23S rRNA structures from forming. Promotes peptidyl transferase center (PTC) maturation. The polypeptide is Dual-action ribosomal maturation protein DarP (Xylella fastidiosa (strain Temecula1 / ATCC 700964)).